The following is a 635-amino-acid chain: Transaminated amino acid decarboxylase (635 aa).

Lys588 participates in a covalent cross-link: Glycyl lysine isopeptide (Lys-Gly) (interchain with G-Cter in ubiquitin).

It belongs to the TPP enzyme family. It depends on Mg(2+) as a cofactor. The cofactor is thiamine diphosphate.

Its subcellular location is the cytoplasm. The enzyme catalyses 4-methyl-2-oxopentanoate + H(+) = 3-methylbutanal + CO2. The catalysed reaction is (S)-3-methyl-2-oxopentanoate + H(+) = 2-methylbutanal + CO2. It carries out the reaction indole-3-pyruvate + H(+) = indole-3-acetaldehyde + CO2. It catalyses the reaction 3-phenylpyruvate + H(+) = 2-phenylacetaldehyde + CO2. The enzyme catalyses 4-methylsulfanyl-2-oxobutanoate + H(+) = 3-methylsulfanylpropanal + CO2. The catalysed reaction is 3-(4-hydroxyphenyl)pyruvate + H(+) = (4-hydroxyphenyl)acetaldehyde + CO2. Its pathway is amino-acid degradation; Ehrlich pathway. Its function is as follows. One of five 2-oxo acid decarboxylases (PDC1, PDC5, PDC6, ARO10, and THI3) involved in amino acid catabolism. The enzyme catalyzes the decarboxylation of amino acids, which, in a first step, have been transaminated to the corresponding 2-oxo acids (alpha-keto-acids). In a third step, the resulting aldehydes are reduced to alcohols, collectively referred to as fusel oils or alcohols. Its preferred substrates are the transaminated amino acids derived from phenylalanine (phenylpyruvate), tryptophan (3-(indol-3-yl)pyruvate), and probably tyrosine (4-hydroxyphenylpyruvate), but also isoleucine ((3S)-3-methyl-2-oxopentanoate, also alpha-keto-beta-methylvalerate) and methionine (4-methylthio-2-oxobutanoate), whereas transaminated leucine (4-methyl-2-oxopentanoate, also alpha-keto-isocaproate) is a low efficiency substrate and transaminated valine and pyruvate are no substrates. In analogy to the pyruvate decarboxylases the enzyme may in a side-reaction catalyze condensation (or carboligation) reactions leading to the formation of 2-hydroxy ketone, collectively called acyloins. The protein is Transaminated amino acid decarboxylase (ARO10) of Saccharomyces cerevisiae (strain ATCC 204508 / S288c) (Baker's yeast).